A 252-amino-acid chain; its full sequence is MIHSKRLRLWLYLVLLAVFISACGMKEDKQIKENFNKTLSLYPTKNLDDFYDKEGFRDQEFEKGDKGTWIVDSEMVVELKDKKMESRSMVLYINRNTRTTKGNFIVRELWEDSKGYAQSKDTKYPVKMEHNRIIPTKPIADDKLRKEIENFKFFVQYGDFKDINDYKDGDISYNPNVPSYSAEYQLSNNDYNVKQLRKRYDIPTKKAPKLLIKGDGDLKGSSIGHKNLEFTFVENKEENIYFTDSINFKPTK.

A signal peptide spans 1–22 (MIHSKRLRLWLYLVLLAVFISA). A lipid anchor (N-palmitoyl cysteine) is attached at Cys23. Cys23 carries S-diacylglycerol cysteine lipidation.

It belongs to the staphylococcal tandem lipoprotein family.

The protein resides in the cell membrane. This is an uncharacterized protein from Staphylococcus aureus (strain MW2).